The sequence spans 180 residues: Large ribosomal subunit protein uL5c (180 aa).

Belongs to the universal ribosomal protein uL5 family. Part of the 50S ribosomal subunit; contacts the 5S rRNA.

The protein resides in the plastid. It is found in the chloroplast. In terms of biological role, binds 5S rRNA, forms part of the central protuberance of the 50S subunit. The protein is Large ribosomal subunit protein uL5c (rpl5) of Oedogonium cardiacum (Filamentous green alga).